The following is a 186-amino-acid chain: Single-stranded DNA-binding protein 1 (186 aa).

An SSB domain is found at 1–108 (MDATVTVVGN…LEIDEIGPTL (108 aa)). The segment at 120–186 (QAGHGVSPDP…EDFDSDEVPF (67 aa)) is disordered. Residues 132-141 (DSQTGQGIDS) are compositionally biased toward polar residues. The segment covering 175-186 (SYEDFDSDEVPF) has biased composition (acidic residues).

Homotetramer.

This is Single-stranded DNA-binding protein 1 (ssb1) from Tropheryma whipplei (strain TW08/27) (Whipple's bacillus).